Here is a 506-residue protein sequence, read N- to C-terminus: Anaerobic nitric oxide reductase transcription regulator NorR (506 aa).

At Asp-57 the chain carries 4-aspartylphosphate. The Sigma-54 factor interaction domain maps to 187–416 (MIGLSPAMTQ…LEHAIHRAVV (230 aa)). Residues 215 to 222 (GETGTGKE) and 278 to 287 (ADNGTLFLDE) contribute to the ATP site. The H-T-H motif DNA-binding region spans 481-500 (WAASARALETDVANLHRLAK).

The protein operates within nitrogen metabolism; nitric oxide reduction. Its function is as follows. Required for the expression of anaerobic nitric oxide (NO) reductase, acts as a transcriptional activator for at least the norVW operon. Activation also requires sigma-54. This Salmonella agona (strain SL483) protein is Anaerobic nitric oxide reductase transcription regulator NorR.